The primary structure comprises 493 residues: Ecdysteroid UDP-glucosyltransferase (493 aa).

A signal peptide spans 1–17 (MIFILLTTLLAVGGAQT).

Belongs to the UDP-glycosyltransferase family.

Catalyzes the transfer of glucose from UDP-glucose to ecdysteroids which are insect molting hormones. Expression of egt interferes with normal insect development and block molting. This is Ecdysteroid UDP-glucosyltransferase (egt) from Choristoneura fumiferana defective polyhedrosis virus (Cfdef).